A 370-amino-acid chain; its full sequence is Phospho-N-acetylmuramoyl-pentapeptide-transferase (370 aa).

11 helical membrane passes run 15 to 35 (PLEGKVSAGVLAVVVYAAAFA), 44 to 64 (LLSLPLLIATLIAAIVTWWGV), 93 to 113 (MGGLLVVPVGVIVGGLISWSG), 115 to 135 (AAEQLLAVAFITLAYMVVGGI), 155 to 175 (LLLQALAAVIFLIWAGMRGWI), 183 to 203 (FDINLPLNWLIWPLAVFVFLA), 213 to 233 (GLDGLAAGCGALVFTGMALQL), 240 to 260 (GDPSLAGFCMAMAGCWIGFLV), 268 to 288 (VFMGDTGSLAMGGALTAVALL), 296 to 316 (LIMGGIFLAESLSVIIQVWVF), and 347 to 367 (QLVVPGFWLATVFLVLIGIFF).

It belongs to the glycosyltransferase 4 family. MraY subfamily. It depends on Mg(2+) as a cofactor.

Its subcellular location is the cell inner membrane. The catalysed reaction is UDP-N-acetyl-alpha-D-muramoyl-L-alanyl-gamma-D-glutamyl-meso-2,6-diaminopimeloyl-D-alanyl-D-alanine + di-trans,octa-cis-undecaprenyl phosphate = di-trans,octa-cis-undecaprenyl diphospho-N-acetyl-alpha-D-muramoyl-L-alanyl-D-glutamyl-meso-2,6-diaminopimeloyl-D-alanyl-D-alanine + UMP. Its pathway is cell wall biogenesis; peptidoglycan biosynthesis. Its function is as follows. Catalyzes the initial step of the lipid cycle reactions in the biosynthesis of the cell wall peptidoglycan: transfers peptidoglycan precursor phospho-MurNAc-pentapeptide from UDP-MurNAc-pentapeptide onto the lipid carrier undecaprenyl phosphate, yielding undecaprenyl-pyrophosphoryl-MurNAc-pentapeptide, known as lipid I. The protein is Phospho-N-acetylmuramoyl-pentapeptide-transferase of Synechococcus sp. (strain CC9311).